Consider the following 517-residue polypeptide: Tyrosine 3-monooxygenase (517 aa).

At Ser-33 the chain carries Phosphoserine; by PKA. His-345, His-350, and Glu-390 together coordinate Fe cation.

The protein belongs to the biopterin-dependent aromatic amino acid hydroxylase family. Fe(2+) is required as a cofactor.

It is found in the cytoplasm. The protein localises to the perinuclear region. Its subcellular location is the cell projection. The protein resides in the axon. The catalysed reaction is (6R)-L-erythro-5,6,7,8-tetrahydrobiopterin + L-tyrosine + O2 = (4aS,6R)-4a-hydroxy-L-erythro-5,6,7,8-tetrahydrobiopterin + L-dopa. Its pathway is catecholamine biosynthesis; dopamine biosynthesis; dopamine from L-tyrosine: step 1/2. Phosphorylation leads to an increase in the catalytic activity. Involved in the synthesis of catecholamines, such as dopamine. Has a role in serotonin signaling. Required for normal explorative and foraging behavior. The protein is Tyrosine 3-monooxygenase (cat-2) of Caenorhabditis briggsae.